We begin with the raw amino-acid sequence, 1090 residues long: MSKRKSISTHDKSTKRARPVEEEEDSEDADDRDQDVERLSPQVLPSGDVSDVGIVKSITLNNFMCHANLGPFAFGSNVNFIVGKNGSGKSAILTGLIVALGGNAQATNRGSSLKGFVKEGESFAVVSITLNNIGKDAYKPEVYGQAIVIDQKITREGIRTYKLKSQSGHIISTKKEDLVTILDYYNIQVNNPVTILTQEMSKYFLHSKGGAEKYKFFMKATQLEQMKDDFVHIKSTKSVTVDKVEQHSECLKDLKRDYLEKEDRYKSLASVNEMYTKLEELKKQMAWALVGEVEKEFEPMKEKLESDRCATNKFNEKVDEWKKKVEVAEGKQKQSHEQLEEITQQVSELQSKCTEFKTEVQRRNADLKSCEVTVHRHKAILRDLEKDKAQLSSKINDLSLSISQATGAESQARMERIAQIEAALEDLTHHTSTLGQQIEQYQHSYRHAIEGQGKMKRELEGLQKSIDANRRQLQSMESSRSNRLQRFGDQMPALLAAIDEAHKKGQFKHRPRGPLGYLISLKDPELALSIEICLKNLVQAFTCDNYDDERVLKSLMTKVLQHGRRPAIITSRFFPKVHDVSVRAVNHPDYPSVLQALEIEDPVVANCLIDQRAIECILLIKNRTEARRVMQGRNPPQNCTSAFSVEGDQIFTNRSYTADQTRANFLSKDVEEGIRHLKREMETQKVQAAHIQQQIRSTDKNISENQDLLRRTQTEQKTTEVKTMKLQLELTDLKNVEEPQSEDLAELKSAFENAEQEYKQHKQLIDTAAEEADVKKVETKLTPLFTSLSCNILWVHCLFVLLQEELSKTDQEVMKCKHHEKHYEERRNAHLCSIKTLENNVASKEKELQESIAKAKEICPEQLVVRRTARSLDVEITRLKVKIATQREHQGDREEIVREYHEALESYANKAQQIKNLNNFIKCLDRVMDQRLYAYTVLRRFLSARCKYYFDSMLAQRGFTGNMTFDHKNETLSISVQPGQGNKADLNDMRCLSGGERSFSTVCFVLSLWPITEAPFRCLDEFDVYMDMANRRNTQRQSGLKMATSQKIRQLIFLTPQSMSSLPECRRIHIVQLNDPVHGQTQMEQEEEGP.

Residues 1-44 (MSKRKSISTHDKSTKRARPVEEEEDSEDADDRDQDVERLSPQVL) are disordered. Basic and acidic residues predominate over residues 8 to 20 (STHDKSTKRARPV). Residues 21-34 (EEEEDSEDADDRDQ) are compositionally biased toward acidic residues. Position 83–90 (83–90 (GKNGSGKS)) interacts with ATP. A coiled-coil region spans residues 242–479 (DKVEQHSECL…RRQLQSMESS (238 aa)). The flexible hinge stretch occupies residues 480–667 (RSNRLQRFGD…ADQTRANFLS (188 aa)). 2 coiled-coil regions span residues 668 to 858 (KDVE…AKEI) and 894 to 919 (EEIVREYHEALESYANKAQQIKNLNN).

This sequence belongs to the SMC family. SMC6 subfamily. In terms of assembly, forms a heterodimer with smc5. Component of the SMC5-SMC6 complex which consists at least of smc5, smc6, nsmce2, nsmce1 and nsmce4a.

The protein resides in the nucleus. It is found in the chromosome. It localises to the telomere. Its function is as follows. Core component of the SMC5-SMC6 complex, a complex involved in repair of DNA double-strand breaks by homologous recombination. The complex may promote sister chromatid homologous recombination by recruiting the SMC1-SMC3 cohesin complex to double-strand breaks. The complex is required for telomere maintenance via recombination and mediates sumoylation of shelterin complex (telosome) components. The polypeptide is Structural maintenance of chromosomes protein 6 (smc6) (Takifugu rubripes (Japanese pufferfish)).